Here is a 764-residue protein sequence, read N- to C-terminus: 5-methyltetrahydropteroyltriglutamate--homocysteine methyltransferase (764 aa).

Residues 16–19 and lysine 121 contribute to the 5-methyltetrahydropteroyltri-L-glutamate site; that span reads RELK. L-homocysteine contacts are provided by residues 440–442 and glutamate 493; that span reads IGS. L-methionine is bound by residues 440–442 and glutamate 493; that span reads IGS. Residues 524 to 525 and tryptophan 570 each bind 5-methyltetrahydropteroyltri-L-glutamate; that span reads RC. Aspartate 608 contributes to the L-homocysteine binding site. Aspartate 608 is a binding site for L-methionine. Glutamate 614 lines the 5-methyltetrahydropteroyltri-L-glutamate pocket. Zn(2+) contacts are provided by histidine 650, cysteine 652, and glutamate 674. Histidine 703 (proton donor) is an active-site residue. Cysteine 735 serves as a coordination point for Zn(2+).

It belongs to the vitamin-B12 independent methionine synthase family. Requires Zn(2+) as cofactor.

The enzyme catalyses 5-methyltetrahydropteroyltri-L-glutamate + L-homocysteine = tetrahydropteroyltri-L-glutamate + L-methionine. The protein operates within amino-acid biosynthesis; L-methionine biosynthesis via de novo pathway; L-methionine from L-homocysteine (MetE route): step 1/1. Functionally, catalyzes the transfer of a methyl group from 5-methyltetrahydrofolate to homocysteine resulting in methionine formation. This Burkholderia orbicola (strain MC0-3) protein is 5-methyltetrahydropteroyltriglutamate--homocysteine methyltransferase.